Reading from the N-terminus, the 536-residue chain is Probable cytochrome P450 520A1 (536 aa).

The chain crosses the membrane as a helical span at residues 1 to 21 (MEILTFIIYLITFFILFDFYK). Residue Cys479 participates in heme binding.

This sequence belongs to the cytochrome P450 family. Heme is required as a cofactor.

Its subcellular location is the membrane. The polypeptide is Probable cytochrome P450 520A1 (cyp520A1) (Dictyostelium discoideum (Social amoeba)).